A 360-amino-acid chain; its full sequence is Peptide chain release factor 1 (360 aa).

Gln-235 is subject to N5-methylglutamine.

Belongs to the prokaryotic/mitochondrial release factor family. Post-translationally, methylated by PrmC. Methylation increases the termination efficiency of RF1.

The protein localises to the cytoplasm. Functionally, peptide chain release factor 1 directs the termination of translation in response to the peptide chain termination codons UAG and UAA. This chain is Peptide chain release factor 1, found in Mannheimia succiniciproducens (strain KCTC 0769BP / MBEL55E).